Here is a 329-residue protein sequence, read N- to C-terminus: MAP kinase-activated protein kinase 2 (329 aa).

Residues 1–7 and lysine 22 each bind ATP; that span reads LGINGKV. A Protein kinase domain is found at 1-254; the sequence is LGINGKVLRI…ITEFMNHPWI (254 aa). Residue 68-70 coordinates staurosporine; it reads ECL. Catalysis depends on aspartate 115, which acts as the Proton acceptor. The residue at position 151 (threonine 151) is a Phosphothreonine; by MAPK14. Phosphoserine; by MAPK14 is present on serine 201. Phosphoserine; by autocatalysis is present on serine 257. The tract at residues 257–293 is autoinhibitory helix; that stretch reads STKVPQTPLHTSRVLKEDKERWEDVKEEMTSALATMR. Threonine 263 carries the post-translational modification Phosphothreonine; by MAPK14. Residue lysine 282 forms a Glycyl lysine isopeptide (Lys-Gly) (interchain with G-Cter in SUMO) linkage. Residues 285 to 294 carry the Nuclear export signal (NES) motif; that stretch reads MTSALATMRV. The p38 MAPK-binding site stretch occupies residues 295 to 319; that stretch reads DYEQIKIKKIEDASNPLLLKRRKKA. 2 consecutive short sequence motifs (bipartite nuclear localization signal) follow at residues 300–303 and 314–318; these read KIKK and KRRKK.

The protein belongs to the protein kinase superfamily. CAMK Ser/Thr protein kinase family. In terms of assembly, heterodimer with p38-alpha/MAPK14; this heterodimer forms a stable complex: molecules are positioned 'face to face' so that the ATP-binding sites of both kinases are at the heterodimer interface. Interacts with PHC2. Interacts with HSF1. Sumoylation inhibits the protein kinase activity. Post-translationally, phosphorylated and activated by MAP kinase p38-alpha/MAPK14 at Thr-151, Ser-201 and Thr-263.

It localises to the cytoplasm. It is found in the nucleus. It carries out the reaction L-seryl-[protein] + ATP = O-phospho-L-seryl-[protein] + ADP + H(+). It catalyses the reaction L-threonyl-[protein] + ATP = O-phospho-L-threonyl-[protein] + ADP + H(+). Activated following phosphorylation by p38-alpha/MAPK14 following various stresses. Inhibited following sumoylation. Specifically inhibited by pyrrolopyridine inhibitors. Its function is as follows. Stress-activated serine/threonine-protein kinase involved in cytokine production, endocytosis, reorganization of the cytoskeleton, cell migration, cell cycle control, chromatin remodeling, DNA damage response and transcriptional regulation. Following stress, it is phosphorylated and activated by MAP kinase p38-alpha/MAPK14, leading to phosphorylation of substrates. Phosphorylates serine in the peptide sequence, Hyd-X-R-X(2)-S, where Hyd is a large hydrophobic residue. Phosphorylates ALOX5, CDC25B, CDC25C, CEP131, ELAVL1, HNRNPA0, HSP27/HSPB1, KRT18, KRT20, LIMK1, LSP1, PABPC1, PARN, PDE4A, RCSD1, RPS6KA3, TAB3 and TTP/ZFP36. Phosphorylates HSF1; leading to the interaction with HSP90 proteins and inhibiting HSF1 homotrimerization, DNA-binding and transactivation activities. Mediates phosphorylation of HSP27/HSPB1 in response to stress, leading to the dissociation of HSP27/HSPB1 from large small heat-shock protein (sHsps) oligomers and impairment of their chaperone activities and ability to protect against oxidative stress effectively. Involved in inflammatory response by regulating tumor necrosis factor (TNF) and IL6 production post-transcriptionally: acts by phosphorylating AU-rich elements (AREs)-binding proteins ELAVL1, HNRNPA0, PABPC1 and TTP/ZFP36, leading to regulation of the stability and translation of TNF and IL6 mRNAs. Phosphorylation of TTP/ZFP36, a major post-transcriptional regulator of TNF, promotes its binding to 14-3-3 proteins and reduces its ARE mRNA affinity, leading to inhibition of dependent degradation of ARE-containing transcripts. Phosphorylates CEP131 in response to cellular stress following ultraviolet irradiation which promotes binding of CEP131 to 14-3-3 proteins and inhibits formation of novel centriolar satellites. Also involved in late G2/M checkpoint following DNA damage through a process of post-transcriptional mRNA stabilization: following DNA damage, relocalizes from nucleus to cytoplasm and phosphorylates HNRNPA0 and PARN, leading to stabilization of GADD45A mRNA. Involved in toll-like receptor signaling pathway (TLR) in dendritic cells: required for acute TLR-induced macropinocytosis by phosphorylating and activating RPS6KA3. The sequence is that of MAP kinase-activated protein kinase 2 (MAPKAPK2) from Cricetulus longicaudatus (Long-tailed dwarf hamster).